Consider the following 277-residue polypeptide: S-formylglutathione hydrolase FrmB (277 aa).

Catalysis depends on charge relay system residues Ser-145, Asp-221, and His-254.

Belongs to the esterase D family.

It catalyses the reaction S-formylglutathione + H2O = formate + glutathione + H(+). Serine hydrolase involved in the detoxification of formaldehyde. Hydrolyzes S-formylglutathione to glutathione and formate. The protein is S-formylglutathione hydrolase FrmB (frmB) of Escherichia coli (strain K12 / DH10B).